The following is a 402-amino-acid chain: Mannonate dehydratase 1 (402 aa).

It belongs to the mannonate dehydratase family. Fe(2+) is required as a cofactor. The cofactor is Mn(2+).

It catalyses the reaction D-mannonate = 2-dehydro-3-deoxy-D-gluconate + H2O. It participates in carbohydrate metabolism; pentose and glucuronate interconversion. Catalyzes the dehydration of D-mannonate. The protein is Mannonate dehydratase 1 (uxuA1) of Agrobacterium fabrum (strain C58 / ATCC 33970) (Agrobacterium tumefaciens (strain C58)).